The primary structure comprises 613 residues: Forkhead box protein O (613 aa).

4 disordered regions span residues 39–90 (RARS…KNSS), 182–205 (KSVRRRAASMETSRYEKRRGRAKK), 217–269 (GLND…RLSP), and 317–360 (QGFS…PASG). The residue at position 44 (threonine 44) is a Phosphothreonine; by PKB/AKT1. The segment covering 63–80 (TKASNQQLAPGDSQQAIQ) has biased composition (polar residues). Serine 75 carries the post-translational modification Phosphoserine. A compositionally biased stretch (low complexity) spans 81–90 (NANAAKKNSS). Residues 95 to 201 (WGNLSYADLI…ETSRYEKRRG (107 aa)) constitute a DNA-binding region (fork-head). A Phosphoserine; by PKB/AKT1 modification is found at serine 190. Polar residues-rich tracts occupy residues 221–230 (ATPSPSSSVS) and 256–265 (RASSNASSCG). Phosphoserine; by PKB/AKT1 is present on serine 259. 3 positions are modified to phosphoserine: serine 262, serine 263, and serine 268. Pro residues predominate over residues 327-336 (SQPPPPPYQP). The span at 337–353 (PQHQQAQQQQQQQSPYA) shows a compositional bias: low complexity.

In terms of assembly, interacts with melt.

Its subcellular location is the cytoplasm. It localises to the nucleus. Transcription factor involved in the regulation of the insulin signaling pathway. Consistently activates both the downstream target Thor\d4EBP and the feedback control target InR. Involved in negative regulation of the cell cycle, modulating cell growth and proliferation. In response to cellular stresses, such as nutrient deprivation or increased levels of reactive oxygen species, foxo is activated and inhibits growth through the action of target genes such as Thor. Foxo activated in the adult fat body can regulate lifespan in adults; an insulin peptide itself may function as one secondary messenger of insulin-regulated aging. Also regulates Lip4, homolog of human acid lipases, thereby acting as a key modulator of lipid metabolism by insulin signaling and integrates insulin responses to glucose and lipid homeostasis. The chain is Forkhead box protein O from Drosophila melanogaster (Fruit fly).